A 1093-amino-acid polypeptide reads, in one-letter code: Small G protein signaling modulator 1 (1093 aa).

The region spanning 36–190 (HEDSSHIISF…EYTKMKTADH (155 aa)) is the RUN domain. Positions 256–297 (LLYGKNNVLVQPRDDMEAVPGYLSLHQTADVMTLKWTPNQLM) are important for interaction with RAB9A and RAB9B. The segment at 301–350 (VGDLDYEKSVYWDYAVTIRLEEIVYLHCHQQVDSGGTVVLVSQDGIQRPP) is required for interaction with RAP family members. Disordered regions lie at residues 377–412 (DPPL…KEDD), 645–778 (DSTI…ELAV), and 810–838 (DGAV…EEPE). Residues 385 to 397 (GKGKVFPKLRKRS) are compositionally biased toward basic residues. A Rab-GAP TBC domain is found at 562 to 1026 (GVQPEIRRAV…SVWETIWAAK (465 aa)). Polar residues predominate over residues 647-676 (TISNESSQSCSSGRQNLRLQSDSSSSTQVF). A compositionally biased stretch (basic and acidic residues) spans 687-696 (AEGRSEEKHP). Over residues 702 to 736 (NPANGTCSPDSGHPSSHNFSSGLSEHSEPSLSTED) the composition is skewed to polar residues. Basic and acidic residues-rich tracts occupy residues 766–776 (TSRDEAPREEL) and 820–829 (EADKPSRADS).

This sequence belongs to the RUTBC family. Interacts with RAB9A (GTP-bound form) and RAB9B. Interacts with RAB3A, RAB4A, RAB5A, RAB8A, RAB11A, RAP1A, RAP1B, RAP2A and RAP2B. No interaction with RAB27A. Expressed only in brain.

It localises to the golgi apparatus. It is found in the trans-Golgi network. The protein resides in the cytoplasm. The protein localises to the cytoplasmic vesicle membrane. In terms of biological role, interacts with numerous Rab family members, functioning as Rab effector for some, and as GTPase activator for others. Promotes GTP hydrolysis by RAB34 and RAB36. Probably functions as a GTPase effector with RAB9A and RAB9B; does not stimulate GTP hydrolysis with RAB9A and RAB9B. The sequence is that of Small G protein signaling modulator 1 (Sgsm1) from Mus musculus (Mouse).